A 735-amino-acid polypeptide reads, in one-letter code: MAEPLLRKTFSRLRGREKLPRKKSDAKDRGRPAQRSEPKPPEPEPRVLEGSQAGAEVPLSPETPRSPARGAYLQSLEPSSRRWVLGGAKPPEEISLGPRTPSSGEPAGEIWYNPIPEEDPRPPAPEPVGSQLASSEPEGPILQGAAPTSPPTKTSRTKSPGPARRLSMKMKKLPELRRRLSLRSTRTSRERERTAPAGSVISRYHLDSSVATPGQASVAGGTRSPRGGYLSDGDSPERPGGPPSPTAFRPYEVGPSARAPPAALWGRLSLHLYGLGGLRPTPGATPRDLCCLLQVDGVARARTGPLRSGPDFLRLDHTFHLELEAARLLRALVLAWDPGVRRHRPCAQGTVLLPTIFRGCQAQQLAVRLEPQGLLYAKLTLSEQQEAPATVEPRVFGLPLQLLVEREQSPGQVPLIIRKCVGQIECRGLRVVGLYRLCGSAAVKKELRDAFEQDSAAVCLSEDVYPDINVITGILKDYLRELPTPLITQPLYQVVLEAMAQGHPSRASLGPEGTRGLLSCLPDVERATLTLLLDHLRLVSSFHTHNRMTPQNLAVCFGPVLLPARQTPSRTRLRGSGPGVSSAVDFKRHIEVLHYLLQSWPDTRRPSETPDVAPYLRPKRQPPLHLPLDGPEVVTRPRGRGGPESPPSNRYAGDWSVCGGDLLPRGRDFLSGPDYDHVTGSDSEEDEDESGEPRGTTDFEDEFDAPFNPHLNLKDFDALILDLERELSKQINVCL.

3 disordered regions span residues methionine 1–valine 253, proline 601–tryptophan 655, and phenylalanine 669–proline 706. Residues arginine 14 to valine 47 show a composition bias toward basic and acidic residues. A compositionally biased stretch (low complexity) spans proline 151–proline 160. Serine 224, serine 231, serine 235, and serine 244 each carry phosphoserine. The 118-residue stretch at arginine 249 to alanine 366 folds into the C2 domain. The Rho-GAP domain maps to leucine 398–arginine 604. Residues phenylalanine 669–threonine 679 are compositionally biased toward basic and acidic residues. Residues serine 681 and serine 683 each carry the phosphoserine modification.

Palmitoylated. Probably palmitoylated by ZDHHC3 and ZDHHC7.

Functionally, GTPase activator for the Rho-type GTPases. As a GCM1 downstream effector, it is involved in placental development and positively regulates trophoblast cells migration. It regulates cytoskeletal remodeling by controlling the activity of Rho GTPases including RHOA, CDC42 and RAC1. This Rattus norvegicus (Rat) protein is Rho GTPase-activating protein SYDE1 (Syde1).